The primary structure comprises 339 residues: Ribosomal RNA small subunit methyltransferase C (339 aa).

The protein belongs to the methyltransferase superfamily. RsmC family. In terms of assembly, monomer.

It is found in the cytoplasm. It carries out the reaction guanosine(1207) in 16S rRNA + S-adenosyl-L-methionine = N(2)-methylguanosine(1207) in 16S rRNA + S-adenosyl-L-homocysteine + H(+). Functionally, specifically methylates the guanine in position 1207 of 16S rRNA in the 30S particle. The sequence is that of Ribosomal RNA small subunit methyltransferase C from Aliivibrio fischeri (strain ATCC 700601 / ES114) (Vibrio fischeri).